Consider the following 211-residue polypeptide: Outer-membrane lipoprotein carrier protein (211 aa).

An N-terminal signal peptide occupies residues 1–24 (MRNRILVSACAALAMFAMQAPAHA).

The protein belongs to the LolA family. As to quaternary structure, monomer.

The protein resides in the periplasm. In terms of biological role, participates in the translocation of lipoproteins from the inner membrane to the outer membrane. Only forms a complex with a lipoprotein if the residue after the N-terminal Cys is not an aspartate (The Asp acts as a targeting signal to indicate that the lipoprotein should stay in the inner membrane). In Cupriavidus taiwanensis (strain DSM 17343 / BCRC 17206 / CCUG 44338 / CIP 107171 / LMG 19424 / R1) (Ralstonia taiwanensis (strain LMG 19424)), this protein is Outer-membrane lipoprotein carrier protein.